The chain runs to 347 residues: NADH-ubiquinone oxidoreductase chain 2 (347 aa).

Helical transmembrane passes span 3 to 23 (PIIL…VMIS), 25 to 45 (HWLL…PIMM), 67 to 87 (SMLL…WTVM), 96 to 116 (MLMT…FWVP), 122 to 142 (IPLS…MSVL), 145 to 165 (ILPS…ITIG), 178 to 198 (IMAY…LYNP), 200 to 220 (MTLL…TLFM), 237 to 257 (APIM…LPPL), 274 to 294 (DSII…YFYM), and 325 to 345 (LLPT…ILSI).

It belongs to the complex I subunit 2 family. Core subunit of respiratory chain NADH dehydrogenase (Complex I) which is composed of 45 different subunits. Interacts with TMEM242.

The protein resides in the mitochondrion inner membrane. It carries out the reaction a ubiquinone + NADH + 5 H(+)(in) = a ubiquinol + NAD(+) + 4 H(+)(out). In terms of biological role, core subunit of the mitochondrial membrane respiratory chain NADH dehydrogenase (Complex I) which catalyzes electron transfer from NADH through the respiratory chain, using ubiquinone as an electron acceptor. Essential for the catalytic activity and assembly of complex I. The chain is NADH-ubiquinone oxidoreductase chain 2 from Ovis aries (Sheep).